Reading from the N-terminus, the 112-residue chain is Small ribosomal subunit protein bS6 (112 aa).

The protein belongs to the bacterial ribosomal protein bS6 family.

Binds together with bS18 to 16S ribosomal RNA. The protein is Small ribosomal subunit protein bS6 of Azobacteroides pseudotrichonymphae genomovar. CFP2.